The following is a 259-amino-acid chain: UPF0246 protein RD1_0358 (259 aa).

This sequence belongs to the UPF0246 family.

The protein is UPF0246 protein RD1_0358 of Roseobacter denitrificans (strain ATCC 33942 / OCh 114) (Erythrobacter sp. (strain OCh 114)).